The sequence spans 127 residues: Mini-ribonuclease 3-like protein (127 aa).

Asp19 is an active-site residue.

It belongs to the MrnC RNase family.

In terms of biological role, might be a ribonuclease involved in RNA processing. In Ilyobacter polytropus (strain ATCC 51220 / DSM 2926 / LMG 16218 / CuHBu1), this protein is Mini-ribonuclease 3-like protein (mrnCL).